A 236-amino-acid polypeptide reads, in one-letter code: Orotidine 5'-phosphate decarboxylase (236 aa).

Residues D17, K39, 66-75 (DLKFHDIPNT), T125, R186, Q195, G215, and R216 each bind substrate. K68 serves as the catalytic Proton donor.

Belongs to the OMP decarboxylase family. Type 1 subfamily. In terms of assembly, homodimer.

It carries out the reaction orotidine 5'-phosphate + H(+) = UMP + CO2. It functions in the pathway pyrimidine metabolism; UMP biosynthesis via de novo pathway; UMP from orotate: step 2/2. In terms of biological role, catalyzes the decarboxylation of orotidine 5'-monophosphate (OMP) to uridine 5'-monophosphate (UMP). The chain is Orotidine 5'-phosphate decarboxylase from Buchnera aphidicola subsp. Schizaphis graminum (strain Sg).